We begin with the raw amino-acid sequence, 337 residues long: DNA-directed RNA polymerase subunit alpha (337 aa).

The alpha N-terminal domain (alpha-NTD) stretch occupies residues M1 to E233. The interval F249–Y337 is alpha C-terminal domain (alpha-CTD).

Belongs to the RNA polymerase alpha chain family. As to quaternary structure, homodimer. The RNAP catalytic core consists of 2 alpha, 1 beta, 1 beta' and 1 omega subunit. When a sigma factor is associated with the core the holoenzyme is formed, which can initiate transcription.

It catalyses the reaction RNA(n) + a ribonucleoside 5'-triphosphate = RNA(n+1) + diphosphate. In terms of biological role, DNA-dependent RNA polymerase catalyzes the transcription of DNA into RNA using the four ribonucleoside triphosphates as substrates. In Brucella anthropi (strain ATCC 49188 / DSM 6882 / CCUG 24695 / JCM 21032 / LMG 3331 / NBRC 15819 / NCTC 12168 / Alc 37) (Ochrobactrum anthropi), this protein is DNA-directed RNA polymerase subunit alpha.